The primary structure comprises 547 residues: Glucose-6-phosphate isomerase (547 aa).

The Proton donor role is filled by Glu350. Active-site residues include His381 and Lys510.

It belongs to the GPI family.

Its subcellular location is the cytoplasm. The enzyme catalyses alpha-D-glucose 6-phosphate = beta-D-fructose 6-phosphate. Its pathway is carbohydrate biosynthesis; gluconeogenesis. It functions in the pathway carbohydrate degradation; glycolysis; D-glyceraldehyde 3-phosphate and glycerone phosphate from D-glucose: step 2/4. In terms of biological role, catalyzes the reversible isomerization of glucose-6-phosphate to fructose-6-phosphate. In Mesorhizobium japonicum (strain LMG 29417 / CECT 9101 / MAFF 303099) (Mesorhizobium loti (strain MAFF 303099)), this protein is Glucose-6-phosphate isomerase.